A 220-amino-acid chain; its full sequence is Fructose-6-phosphate aldolase (220 aa).

The active-site Schiff-base intermediate with substrate is the Lys85.

This sequence belongs to the transaldolase family. Type 3A subfamily. As to quaternary structure, homodecamer.

Its subcellular location is the cytoplasm. The catalysed reaction is beta-D-fructose 6-phosphate = dihydroxyacetone + D-glyceraldehyde 3-phosphate. Catalyzes the reversible formation of fructose 6-phosphate from dihydroxyacetone and D-glyceraldehyde 3-phosphate via an aldolization reaction. The protein is Fructose-6-phosphate aldolase of Salmonella agona (strain SL483).